We begin with the raw amino-acid sequence, 425 residues long: AFP homolog 2 (425 aa).

Disordered stretches follow at residues 1-207 (MDDD…SGTE) and 288-327 (PFAG…DNSN). The tract at residues 7–17 (LELSLGLSCGG) is necessary and sufficient for the interaction with TOPLESS. The segment covering 20-34 (GKAKGNNNNNAGSSS) has biased composition (low complexity). Residues 37–54 (YRAEGGDRSAKVIDDFKN) show a composition bias toward basic and acidic residues. A compositionally biased stretch (low complexity) spans 66–81 (PSSGSQRSDSGQQPPQ). A compositionally biased stretch (basic and acidic residues) spans 124-140 (NDDKKKEKDSSHVDMHE). Composition is skewed to polar residues over residues 146 to 158 (SHVS…GSTA), 185 to 197 (TDTN…TGQR), and 288 to 299 (PFAGRVPSNSAT). A necessary and sufficient for the interaction with the JAZ proteins region spans residues 322–425 (TGDNSNLNTA…MGMTAASAHT (104 aa)).

Belongs to the Ninja family. As to quaternary structure, component of a complex at least composed of TOPLESS, TPR2, TPR3, TIFY4B/PPD2, MYC3/ATR2 and TIFY3B/JAZ12. Interacts (via C-terminus) with TIFY10A/JAZ1; TIFY10B/JAZ2; TIFY6B/JAZ3; TIFY6A/JAZ4; TIFY11A/JAZ5; TIFY11B/JAZ6; TIFY7/JAZ9; TIFY9/JAZ10; TIFY3A/JAZ11; TIFY3B/JAZ12; TIFY4A/PPD1; TIFY4B/PPD2 and TIFY8 (via TIFY domain). Interacts with TOPLESS. Interacts with PAT1H1.

Its subcellular location is the nucleus. Its function is as follows. Acts as a transcriptional repressor. Negative regulator of jasmonate responses. Connects the JAZ proteins and the non-JAZ protein TIFY8 with the TOPLESS corepressors. This is AFP homolog 2 from Arabidopsis thaliana (Mouse-ear cress).